Here is a 368-residue protein sequence, read N- to C-terminus: Alanine racemase (368 aa).

Lysine 40 acts as the Proton acceptor; specific for D-alanine in catalysis. At lysine 40 the chain carries N6-(pyridoxal phosphate)lysine. Arginine 134 lines the substrate pocket. Tyrosine 263 (proton acceptor; specific for L-alanine) is an active-site residue. Methionine 310 is a binding site for substrate.

Belongs to the alanine racemase family. Pyridoxal 5'-phosphate serves as cofactor.

It catalyses the reaction L-alanine = D-alanine. It functions in the pathway amino-acid biosynthesis; D-alanine biosynthesis; D-alanine from L-alanine: step 1/1. In terms of biological role, catalyzes the interconversion of L-alanine and D-alanine. May also act on other amino acids. The chain is Alanine racemase (alr) from Listeria monocytogenes serotype 1/2a (strain 10403S).